A 460-amino-acid polypeptide reads, in one-letter code: Elongation factor 1-alpha (460 aa).

Position 2 is a n,N,N-trimethylglycine (glycine 2). Lysine 3 bears the N6,N6-dimethyllysine; alternate mark. The residue at position 3 (lysine 3) is an N6-methyllysine; alternate. Residues 6-241 (KTHINVVVIG…DSIEPPKRPT (236 aa)) form the tr-type G domain. Residues 15–22 (GHVDSGKS) form a G1 region. Residue 15 to 22 (GHVDSGKS) coordinates GTP. An N6-methyllysine modification is found at lysine 31. The G2 stretch occupies residues 71–75 (GITID). Residue lysine 80 is modified to N6,N6,N6-trimethyllysine. A G3 region spans residues 92-95 (DAPG). GTP contacts are provided by residues 92-96 (DAPGH) and 154-157 (NKMD). The tract at residues 154-157 (NKMD) is G4. The tract at residues 193 to 195 (SGF) is G5. Position 317 is an N6,N6-dimethyllysine; alternate (lysine 317). Lysine 317 bears the N6-methyllysine; alternate mark. Lysine 391 is modified (N6-methyllysine).

It belongs to the TRAFAC class translation factor GTPase superfamily. Classic translation factor GTPase family. EF-Tu/EF-1A subfamily.

The protein resides in the cytoplasm. This protein promotes the GTP-dependent binding of aminoacyl-tRNA to the A-site of ribosomes during protein biosynthesis. This chain is Elongation factor 1-alpha (TEF), found in Podospora anserina (Pleurage anserina).